We begin with the raw amino-acid sequence, 471 residues long: RuvB-like protein 2 (471 aa).

An ATP-binding site is contributed by Gly75–Thr82.

The protein belongs to the RuvB family. In terms of assembly, probably forms a homohexamer. Interacts with RVB1 and may form heterododecamers with RVB1. Component of the SWR1 chromatin remodeling complex composed of at least ACT1, ARP4, RVB1, RVB2, ARP6, YAF9, VPS71, VPS72, SWC3, SWC4, SWC5, SWC7 and SWR1, and perhaps BDF1. Component of the chromatin-remodeling INO80 complex, at least composed of ARP4, ARP5, ARP8, RVB1, RVB2, TAF14, NHP10, IES1, IES3, IES4, IES6, ACT1, IES2, IES5 and INO80. Also belongs to the R2TP complex composed of at least RVB1, RVB2, TAH1 and PIH1. Interacts with SPT15/TBP.

The protein resides in the nucleus. It localises to the nucleoplasm. It carries out the reaction ATP + H2O = ADP + phosphate + H(+). In terms of biological role, DNA helicase which participates in several chromatin remodeling complexes, including the SWR1 and the INO80 complexes. The SWR1 complex mediates the ATP-dependent exchange of histone H2A for the H2A variant HZT1 leading to transcriptional regulation of selected genes by chromatin remodeling. The INO80 complex remodels chromatin by shifting nucleosomes. Its ability to induce transcription of some phosphate-responsive genes is modulated by inositol polyphosphates. The INO80 complex is involved in DNA repair by associating to 'Ser-129' phosphorylated H2A histones as a response to DNA damage. During transcription may recruit SPT15/TBP to the TATA-boxes of involved genes. Required for box C/D and box H/ACA snoRNA accumulation and involved in pre-rRNA processing. This chain is RuvB-like protein 2 (RVB2), found in Saccharomyces cerevisiae (strain ATCC 204508 / S288c) (Baker's yeast).